Here is an 87-residue protein sequence, read N- to C-terminus: Small ribosomal subunit protein bS20 (87 aa).

This sequence belongs to the bacterial ribosomal protein bS20 family.

Its function is as follows. Binds directly to 16S ribosomal RNA. The chain is Small ribosomal subunit protein bS20 from Shigella flexneri serotype 5b (strain 8401).